A 238-amino-acid chain; its full sequence is Probable transcriptional regulatory protein YeeN (238 aa).

The protein belongs to the TACO1 family. YeeN subfamily.

The protein localises to the cytoplasm. This is Probable transcriptional regulatory protein YeeN from Escherichia coli O157:H7.